Reading from the N-terminus, the 373-residue chain is Queuine tRNA-ribosyltransferase (373 aa).

The active-site Proton acceptor is Asp90. Residues 90-94 (DSGGF), Asp144, Gln193, and Gly220 contribute to the substrate site. Residues 251–257 (GVGTPED) are RNA binding. The active-site Nucleophile is Asp270. The RNA binding; important for wobble base 34 recognition stretch occupies residues 275–279 (TRNAR). Cys308, Cys310, Cys313, and His339 together coordinate Zn(2+).

It belongs to the queuine tRNA-ribosyltransferase family. In terms of assembly, homodimer. Within each dimer, one monomer is responsible for RNA recognition and catalysis, while the other monomer binds to the replacement base PreQ1. Requires Zn(2+) as cofactor.

The enzyme catalyses 7-aminomethyl-7-carbaguanine + guanosine(34) in tRNA = 7-aminomethyl-7-carbaguanosine(34) in tRNA + guanine. The protein operates within tRNA modification; tRNA-queuosine biosynthesis. Functionally, catalyzes the base-exchange of a guanine (G) residue with the queuine precursor 7-aminomethyl-7-deazaguanine (PreQ1) at position 34 (anticodon wobble position) in tRNAs with GU(N) anticodons (tRNA-Asp, -Asn, -His and -Tyr). Catalysis occurs through a double-displacement mechanism. The nucleophile active site attacks the C1' of nucleotide 34 to detach the guanine base from the RNA, forming a covalent enzyme-RNA intermediate. The proton acceptor active site deprotonates the incoming PreQ1, allowing a nucleophilic attack on the C1' of the ribose to form the product. After dissociation, two additional enzymatic reactions on the tRNA convert PreQ1 to queuine (Q), resulting in the hypermodified nucleoside queuosine (7-(((4,5-cis-dihydroxy-2-cyclopenten-1-yl)amino)methyl)-7-deazaguanosine). This is Queuine tRNA-ribosyltransferase from Campylobacter jejuni subsp. jejuni serotype O:23/36 (strain 81-176).